Here is a 148-residue protein sequence, read N- to C-terminus: MNLSSLKPAEGAVKSRKRIGRGPGSGLGGTSTRGHKGAKSRSGYSKKIGFEGGQMPIQRRLPKFGFKNINRVEYKPINLSVLQTLSEANSLTKISVEDLIAAGLVSRNSLVKILANGTVTTALTVEAHAFSKTAEEAIVRAGGSVVKL.

The tract at residues 1–51 (MNLSSLKPAEGAVKSRKRIGRGPGSGLGGTSTRGHKGAKSRSGYSKKIGFE) is disordered. Positions 21-31 (RGPGSGLGGTS) are enriched in gly residues.

The protein belongs to the universal ribosomal protein uL15 family. In terms of assembly, part of the 50S ribosomal subunit.

Its function is as follows. Binds to the 23S rRNA. This chain is Large ribosomal subunit protein uL15, found in Porphyromonas gingivalis (strain ATCC BAA-308 / W83).